Consider the following 1044-residue polypeptide: Disease resistance protein PIK6-NP (1044 aa).

Residues 3-184 (LAVGASEATM…PQIVSIKEPV (182 aa)) form a structured coiled coil (CC) domain region. Positions 187-543 (KTVMENLEKW…IAEGFATEKQ (357 aa)) constitute an NB-ARC domain. The tract at residues 258 to 302 (QVSKQEEAGGSTESSSRDENTREPQGSSSTSSREENTAESGTKRM) is disordered. LRR repeat units lie at residues 635–657 (LAQV…SFNY), 682–705 (MLVL…IEKL), and 706–728 (EYLE…VGQL). The tract at residues 737-771 (GNKNTRKGLRLPQEKRNKAMKNPSPQGKTKEPAEK) is disordered. 6 LRR repeats span residues 808–834 (LTGL…LLSS), 840–862 (SCGL…LYNM), 866–888 (PRYL…ITSI), 889–911 (TTLN…ILRN), 935–958 (KGIL…EFKS), and 980–1004 (MPAL…ILEN).

The protein belongs to the disease resistance NB-LRR family.

In terms of biological role, probable disease resistance protein. Resistance proteins guard the plant against pathogens that contain an appropriate avirulence protein via an indirect interaction with this avirulence protein. That triggers a defense system including the hypersensitive response, which restricts the pathogen growth. At the opposite of cultivar Kusabue, the cultivar Nipponbare doesn't recognize the effector avirulence protein AVR-Pik from M.oryzae. The chain is Disease resistance protein PIK6-NP from Oryza sativa subsp. japonica (Rice).